The primary structure comprises 623 residues: Protein vein (623 aa).

The signal sequence occupies residues 1–40 (MYAQHLRKWSLKTKKQLMPLILLIISYMLLLNTCVLSSSA). Disordered regions lie at residues 70–98 (IPLS…SSNN), 130–162 (DAGS…SMQK), 184–214 (AASS…NYSS), and 229–317 (PESM…QRYN). Low complexity-rich tracts occupy residues 72–98 (LSSD…SSNN) and 136–158 (PAQQ…QQQQ). N76 is a glycosylation site (N-linked (GlcNAc...) asparagine). N211 carries an N-linked (GlcNAc...) asparagine glycan. Positions 233–248 (LEDRSPEQAARSRRDG) are enriched in basic and acidic residues. An N-linked (GlcNAc...) asparagine glycan is attached at N252. A compositionally biased stretch (low complexity) spans 255-267 (RQQQRTGHRQQLQ). A compositionally biased stretch (basic residues) spans 305-316 (QRRKHQRKHQRY). N-linked (GlcNAc...) asparagine glycans are attached at residues N350, N381, N424, N449, N521, and N574. Residues 457–542 (TKIFSKPSKA…AKNKASKAIA (86 aa)) form the Ig-like C2-type domain. Cystine bridges form between C478-C531, C566-C577, C571-C588, and C590-C599. The EGF-like domain occupies 561 to 599 (ASGIPCNFDYCFHNGTCRMIPDINEVYCRCPTEYFGNRC).

Its subcellular location is the secreted. In terms of biological role, ligand for the EGF receptor. Seems to play a role in the global proliferation of wing disc cells and the larval patterning. Shows a strong synergistic genetic interaction with spi, suggesting a molecular interdependence. Required for the development of interveins cells. The sequence is that of Protein vein (vn) from Drosophila melanogaster (Fruit fly).